The primary structure comprises 395 residues: 1-deoxy-D-xylulose 5-phosphate reductoisomerase (395 aa).

The NADPH site is built by Thr15, Gly16, Ser17, Ile18, Gly41, Asn43, and Asn126. A 1-deoxy-D-xylulose 5-phosphate-binding site is contributed by Lys127. Glu128 is a binding site for NADPH. Asp152 serves as a coordination point for Mn(2+). Positions 153, 154, 178, and 201 each coordinate 1-deoxy-D-xylulose 5-phosphate. Glu154 is a binding site for Mn(2+). Gly207 is a binding site for NADPH. Ser214, Asn219, Lys220, and Glu223 together coordinate 1-deoxy-D-xylulose 5-phosphate. Glu223 serves as a coordination point for Mn(2+).

Belongs to the DXR family. It depends on Mg(2+) as a cofactor. Mn(2+) serves as cofactor.

The catalysed reaction is 2-C-methyl-D-erythritol 4-phosphate + NADP(+) = 1-deoxy-D-xylulose 5-phosphate + NADPH + H(+). The protein operates within isoprenoid biosynthesis; isopentenyl diphosphate biosynthesis via DXP pathway; isopentenyl diphosphate from 1-deoxy-D-xylulose 5-phosphate: step 1/6. Functionally, catalyzes the NADPH-dependent rearrangement and reduction of 1-deoxy-D-xylulose-5-phosphate (DXP) to 2-C-methyl-D-erythritol 4-phosphate (MEP). The chain is 1-deoxy-D-xylulose 5-phosphate reductoisomerase from Ruegeria pomeroyi (strain ATCC 700808 / DSM 15171 / DSS-3) (Silicibacter pomeroyi).